The sequence spans 124 residues: Small ribosomal subunit protein uS12 (124 aa).

The residue at position 90 (Asp90) is a 3-methylthioaspartic acid.

The protein belongs to the universal ribosomal protein uS12 family. As to quaternary structure, part of the 30S ribosomal subunit. Contacts proteins S8 and S17. May interact with IF1 in the 30S initiation complex.

Functionally, with S4 and S5 plays an important role in translational accuracy. Its function is as follows. Interacts with and stabilizes bases of the 16S rRNA that are involved in tRNA selection in the A site and with the mRNA backbone. Located at the interface of the 30S and 50S subunits, it traverses the body of the 30S subunit contacting proteins on the other side and probably holding the rRNA structure together. The combined cluster of proteins S8, S12 and S17 appears to hold together the shoulder and platform of the 30S subunit. The protein is Small ribosomal subunit protein uS12 of Wolbachia pipientis wMel.